Here is a 307-residue protein sequence, read N- to C-terminus: Transcription initiation factor IIB (307 aa).

A TFIIB-type zinc finger spans residues 11–42 (FTEECPACGSAEIVFDEERGEYVCANCGLVTE). Residues Cys15, Cys18, Cys34, and Cys37 each coordinate Zn(2+). The tract at residues 48–69 (PGPEWRHFNPDQRQRRSRTGEP) is disordered. Over residues 50–69 (PEWRHFNPDQRQRRSRTGEP) the composition is skewed to basic and acidic residues. 2 consecutive repeat copies span residues 123-207 (LELE…QRRL) and 218-299 (DHLP…EICE).

This sequence belongs to the TFIIB family.

Stabilizes TBP binding to an archaeal box-A promoter. Also responsible for recruiting RNA polymerase II to the pre-initiation complex (DNA-TBP-TFIIB). In Methanopyrus kandleri (strain AV19 / DSM 6324 / JCM 9639 / NBRC 100938), this protein is Transcription initiation factor IIB.